We begin with the raw amino-acid sequence, 372 residues long: UDP-N-acetylglucosamine--N-acetylmuramyl-(pentapeptide) pyrophosphoryl-undecaprenol N-acetylglucosamine transferase (372 aa).

Residues 16–18 (TGG), Asn-128, Arg-164, Ser-192, Ile-250, and Gln-295 each bind UDP-N-acetyl-alpha-D-glucosamine.

Belongs to the glycosyltransferase 28 family. MurG subfamily.

It is found in the cell inner membrane. The catalysed reaction is di-trans,octa-cis-undecaprenyl diphospho-N-acetyl-alpha-D-muramoyl-L-alanyl-D-glutamyl-meso-2,6-diaminopimeloyl-D-alanyl-D-alanine + UDP-N-acetyl-alpha-D-glucosamine = di-trans,octa-cis-undecaprenyl diphospho-[N-acetyl-alpha-D-glucosaminyl-(1-&gt;4)]-N-acetyl-alpha-D-muramoyl-L-alanyl-D-glutamyl-meso-2,6-diaminopimeloyl-D-alanyl-D-alanine + UDP + H(+). Its pathway is cell wall biogenesis; peptidoglycan biosynthesis. Its function is as follows. Cell wall formation. Catalyzes the transfer of a GlcNAc subunit on undecaprenyl-pyrophosphoryl-MurNAc-pentapeptide (lipid intermediate I) to form undecaprenyl-pyrophosphoryl-MurNAc-(pentapeptide)GlcNAc (lipid intermediate II). This Paraburkholderia phytofirmans (strain DSM 17436 / LMG 22146 / PsJN) (Burkholderia phytofirmans) protein is UDP-N-acetylglucosamine--N-acetylmuramyl-(pentapeptide) pyrophosphoryl-undecaprenol N-acetylglucosamine transferase.